We begin with the raw amino-acid sequence, 342 residues long: D-erythrose-4-phosphate dehydrogenase (342 aa).

12–13 (RI) is a binding site for NAD(+). Substrate-binding positions include 154-156 (SCT), R200, 213-214 (TK), and R236. C155 (nucleophile) is an active-site residue. Residue N318 participates in NAD(+) binding.

This sequence belongs to the glyceraldehyde-3-phosphate dehydrogenase family. Epd subfamily. Homotetramer.

The protein localises to the cytoplasm. It catalyses the reaction D-erythrose 4-phosphate + NAD(+) + H2O = 4-phospho-D-erythronate + NADH + 2 H(+). It participates in cofactor biosynthesis; pyridoxine 5'-phosphate biosynthesis; pyridoxine 5'-phosphate from D-erythrose 4-phosphate: step 1/5. Functionally, catalyzes the NAD-dependent conversion of D-erythrose 4-phosphate to 4-phosphoerythronate. The chain is D-erythrose-4-phosphate dehydrogenase from Klebsiella pneumoniae subsp. pneumoniae (strain ATCC 700721 / MGH 78578).